Reading from the N-terminus, the 156-residue chain is Small ribosomal subunit protein uS7c (156 aa).

The protein belongs to the universal ribosomal protein uS7 family. As to quaternary structure, part of the 30S ribosomal subunit.

It localises to the plastid. Its subcellular location is the chloroplast. Its function is as follows. One of the primary rRNA binding proteins, it binds directly to 16S rRNA where it nucleates assembly of the head domain of the 30S subunit. This is Small ribosomal subunit protein uS7c (rps7) from Guillardia theta (Cryptophyte).